A 401-amino-acid polypeptide reads, in one-letter code: Probable cysteine desulfurase (401 aa).

K223 carries the post-translational modification N6-(pyridoxal phosphate)lysine.

This sequence belongs to the class-V pyridoxal-phosphate-dependent aminotransferase family. Csd subfamily. The cofactor is pyridoxal 5'-phosphate.

It carries out the reaction (sulfur carrier)-H + L-cysteine = (sulfur carrier)-SH + L-alanine. Functionally, catalyzes the removal of elemental sulfur and selenium atoms from L-cysteine, L-cystine, L-selenocysteine, and L-selenocystine to produce L-alanine. The polypeptide is Probable cysteine desulfurase (csd) (Pseudomonas aeruginosa (strain ATCC 15692 / DSM 22644 / CIP 104116 / JCM 14847 / LMG 12228 / 1C / PRS 101 / PAO1)).